We begin with the raw amino-acid sequence, 824 residues long: MSISSLFGGRYDNKFLLNMSSAPKIELIVDKVASLSERRLEGRLPEDWFRHIMDPETEFNGEFADALCIGIDEFAQPLPFLPFKALLVTGTAGAGKTNSIQTLAANLDCIVTATTSIAAQNLSVVLNRSKSAQVKTIFKTFGFNSSHVSMSERQSYIANDERSIQIQQKQDLSIYWNVISDIAERALGAVACKTKELPDLCESSVIVIDEAGVILRHILHTVVFFYWFYNALYKTPLYENGIVPCIVCVGSPTQSNALVTSFNPLTQNKDVKRGIDVLSALICDDVLSKYCEVDNNWIIFVNNKRCADHAFGDFLKHIEFGLPLKPELIEYVDQFVKPASYIRNPMNEIETTRLFLSHNEVKNYFRSLHEQVEVTNRNNLFVFPVYFLIKNKTFEDYKSEIGNFSLEIEPWFKSNIHRLNTYSQFADQDLSKTVQLEEIVLEDGSVEETLITCHLKHIRNSSIGVTSKIKASTVGFSGTYEKFVELLQSDLFIEKTSCEQTIHAYSFLSGLMFGGMYSFCCSEFTTPEVLMEIKNIKMPSIEFLESEMSRMSRDVQTVETDERYDFGLVDDGLSDMDLLEIDPCGDPFFTRYSKLPLTNSLSFEEISLLYTTFKDIFISRFAILQKHTKGKFGKTLLVTYNRNNVSRKQCGEIYSHLKSFYGMLTYAIPANNYTLEGYTNDNVVHLGTDKQLPQILYKKGLPRLVIKDEMGFISVLDNNVSKFVDVVNGQSFHLCTTVDYATVSKVSMTITKSQGLSIQKVAIDFGSDPKNLKLSSIYVGMSRVTDPNNLIMNVNPLRLNYENDNFIAPHIVKALKNENTMLIF.

90–97 (GTAGAGKT) lines the ATP pocket.

This sequence belongs to the herpesviridae helicase family. In terms of assembly, associates with the primase and the primase-associated factor to form the helicase-primase complex.

The protein resides in the host nucleus. Functionally, component of the helicase/primase complex. Unwinds the DNA at the replication forks and generates single-stranded DNA for both leading and lagging strand synthesis. The primase synthesizes short RNA primers on the lagging strand that the polymerase elongates using dNTPs. Possesses helicase-like motifs and therefore may act as the helicase subunit of the complex. The sequence is that of DNA replication helicase from Human herpesvirus 6B (strain Z29) (HHV-6 variant B).